We begin with the raw amino-acid sequence, 444 residues long: Probable glycine dehydrogenase (decarboxylating) subunit 1 (444 aa).

Belongs to the GcvP family. N-terminal subunit subfamily. The glycine cleavage system is composed of four proteins: P, T, L and H. In this organism, the P 'protein' is a heterodimer of two subunits.

It catalyses the reaction N(6)-[(R)-lipoyl]-L-lysyl-[glycine-cleavage complex H protein] + glycine + H(+) = N(6)-[(R)-S(8)-aminomethyldihydrolipoyl]-L-lysyl-[glycine-cleavage complex H protein] + CO2. In terms of biological role, the glycine cleavage system catalyzes the degradation of glycine. The P protein binds the alpha-amino group of glycine through its pyridoxal phosphate cofactor; CO(2) is released and the remaining methylamine moiety is then transferred to the lipoamide cofactor of the H protein. The sequence is that of Probable glycine dehydrogenase (decarboxylating) subunit 1 from Carboxydothermus hydrogenoformans (strain ATCC BAA-161 / DSM 6008 / Z-2901).